The primary structure comprises 72 residues: Potassium channel toxin epsilon-KTx 1.1 (72 aa).

A signal peptide spans 1 to 30 (MKLSCGFLLILLVLSAMIATFSEVEAMKPS). 4 disulfides stabilise this stretch: Cys34/Cys42, Cys37/Cys58, Cys41/Cys51, and Cys46/Cys56. Positions 60–72 (GRSDLNDELEKYQ) are excised as a propeptide.

Belongs to the short scorpion toxin superfamily. Potassium channel inhibitor family. Epsilon-KTx 01 subfamily. As to expression, expressed by the venom gland.

The protein localises to the secreted. Functionally, potassium channel blocker. At 3 uM, this toxin blocks voltage-independently voltage-gated potassium channels rKv1.2/KCNA2 (25%), hKv1.3/KCNA3 (27%), rKv4.2/KCND2 (25%), Kv10.1/KCNH1/EAG1 (15%), Kv11/hERG (12%), and Shaker-IR (10%). On hKv1.3/KCNA3, the IC(50) is 17.1 +-3.3 uM. The sequence is that of Potassium channel toxin epsilon-KTx 1.1 from Tityus serrulatus (Brazilian scorpion).